A 240-amino-acid chain; its full sequence is 3-deoxy-D-manno-octulosonic acid kinase (240 aa).

The active site involves D170.

The protein belongs to the protein kinase superfamily. KdkA/RfaP family.

The protein resides in the cell inner membrane. It catalyses the reaction an alpha-Kdo-(2-&gt;6)-lipid IVA + ATP = a 4-O-phospho-alpha-Kdo-(2-&gt;6)-lipid IVA + ADP + H(+). It functions in the pathway bacterial outer membrane biogenesis; LPS core biosynthesis. In terms of biological role, catalyzes the ATP-dependent phosphorylation of the 3-deoxy-D-manno-octulosonic acid (Kdo) residue in Kdo-lipid IV(A) at the 4-OH position. The chain is 3-deoxy-D-manno-octulosonic acid kinase from Mannheimia succiniciproducens (strain KCTC 0769BP / MBEL55E).